Reading from the N-terminus, the 368-residue chain is Chaperone protein DnaJ (368 aa).

The J domain maps to 5–70 (DYYEVLGVSK…EKRSMYDRMG (66 aa)). Residues 132–210 (GVKKTITFTA…CHGSGVADRQ (79 aa)) form a CR-type zinc finger. C145, C148, C162, C165, C184, C187, C198, and C201 together coordinate Zn(2+). CXXCXGXG motif repeat units lie at residues 145–152 (CEVCDGKG), 162–169 (CRTCHGTG), 184–191 (CGTCRGQG), and 198–205 (CQSCHGSG). A disordered region spans residues 349–368 (DGDEHSSSPKKKSFFDRLFD). The segment covering 350-368 (GDEHSSSPKKKSFFDRLFD) has biased composition (basic and acidic residues).

The protein belongs to the DnaJ family. In terms of assembly, homodimer. The cofactor is Zn(2+).

The protein localises to the cytoplasm. Its function is as follows. Participates actively in the response to hyperosmotic and heat shock by preventing the aggregation of stress-denatured proteins and by disaggregating proteins, also in an autonomous, DnaK-independent fashion. Unfolded proteins bind initially to DnaJ; upon interaction with the DnaJ-bound protein, DnaK hydrolyzes its bound ATP, resulting in the formation of a stable complex. GrpE releases ADP from DnaK; ATP binding to DnaK triggers the release of the substrate protein, thus completing the reaction cycle. Several rounds of ATP-dependent interactions between DnaJ, DnaK and GrpE are required for fully efficient folding. Also involved, together with DnaK and GrpE, in the DNA replication of plasmids through activation of initiation proteins. In Acinetobacter baylyi (strain ATCC 33305 / BD413 / ADP1), this protein is Chaperone protein DnaJ.